Here is a 151-residue protein sequence, read N- to C-terminus: 3-dehydroquinate dehydratase (151 aa).

Residue Tyr26 is the Proton acceptor of the active site. Substrate contacts are provided by Asn75, His81, and Asp88. His101 acts as the Proton donor in catalysis. Residues 102–103 (LS) and Arg112 each bind substrate.

The protein belongs to the type-II 3-dehydroquinase family. As to quaternary structure, homododecamer.

It carries out the reaction 3-dehydroquinate = 3-dehydroshikimate + H2O. Its pathway is metabolic intermediate biosynthesis; chorismate biosynthesis; chorismate from D-erythrose 4-phosphate and phosphoenolpyruvate: step 3/7. Catalyzes a trans-dehydration via an enolate intermediate. The sequence is that of 3-dehydroquinate dehydratase from Shewanella denitrificans (strain OS217 / ATCC BAA-1090 / DSM 15013).